A 241-amino-acid polypeptide reads, in one-letter code: MRIIPAIDIIDGKCVRLSKGDYNTKIIYNENPLEVAKKFEAHGVQYLHLVDLDGAKSSQIINYKILEKIASQTALKIDFGGGLKSDNDLRIAFESGANQITGGSIAVKNPEVFNEWIIKYGADKIILGADANNEKVAISGWLEESKEELIPFIQNYQNQGIEYVICTDIAKDGMLAGPSFNLYAKILSETKGIKLIASGGISTFDELPKLAQLGCEGTIIGKAIYENRITLKQLENFILNK.

Catalysis depends on aspartate 8, which acts as the Proton acceptor. The Proton donor role is filled by aspartate 130.

This sequence belongs to the HisA/HisF family.

It is found in the cytoplasm. It catalyses the reaction 1-(5-phospho-beta-D-ribosyl)-5-[(5-phospho-beta-D-ribosylamino)methylideneamino]imidazole-4-carboxamide = 5-[(5-phospho-1-deoxy-D-ribulos-1-ylimino)methylamino]-1-(5-phospho-beta-D-ribosyl)imidazole-4-carboxamide. It participates in amino-acid biosynthesis; L-histidine biosynthesis; L-histidine from 5-phospho-alpha-D-ribose 1-diphosphate: step 4/9. In Flavobacterium psychrophilum (strain ATCC 49511 / DSM 21280 / CIP 103535 / JIP02/86), this protein is 1-(5-phosphoribosyl)-5-[(5-phosphoribosylamino)methylideneamino] imidazole-4-carboxamide isomerase.